The sequence spans 1967 residues: RQC trigger complex helicase SLH1 (1967 aa).

A Helicase ATP-binding 1 domain is found at 297 to 485; the sequence is PVAYKTNENM…FLGVNRQIGM (189 aa). 310–317 is an ATP binding site; sequence APTGAGKT. The DEVH box signature appears at 427 to 430; it reads DEVH. Residues 516 to 735 enclose the Helicase C-terminal 1 domain; that stretch reads NIDKVAYDKL…NVDEAIEWLG (220 aa). The SEC63 1 domain occupies 795-1100; the sequence is AKDLGRVSSD…GCESTHAISF (306 aa). In terms of domain architecture, Helicase ATP-binding 2 spans 1149–1324; it reads YTLYNTNENA…WLGVKDHGLY (176 aa). 1162 to 1169 lines the ATP pocket; it reads SPTGSGKT. The DEAH box motif lies at 1266-1269; it reads DEIH. A Helicase C-terminal 2 domain is found at 1355–1550; the sequence is MNKPVFMAIK…SLHKVLDDHL (196 aa). The 151-residue stretch at 1626–1776 folds into the SEC63 2 domain; the sequence is ATPFLSISSY…MMQCIKQGYW (151 aa).

This sequence belongs to the helicase family. SKI2 subfamily. As to quaternary structure, component of the RQT (ribosome quality control trigger) complex, composed of SLH1, CUE3, and RQT4. Interacts with CUE3. Interacts with RQT4. Interacts with HEL2. Associates with translating ribosomes.

The protein resides in the cytoplasm. It is found in the cytosol. The catalysed reaction is ATP + H2O = ADP + phosphate + H(+). Involved in activation of the ribosome quality control (RQC) pathway, a pathway that degrades nascent peptide chains during problematic translation. Drives the splitting of stalled ribosomes that are polyubiquitinated in a HEL2-dependent manner, as part of the ribosome quality control trigger (RQT) complex. Also represses the translation of non-poly(A) mRNAs together with SKI2. May block translation by inhibiting translation initiation factor 5B (FUN12) action on mRNAs lacking a 3' poly(A) structure. Involved in antiviral defense, preventing L-A dsRNA virus propagation by specifically blocking translation of viral mRNAs. This is RQC trigger complex helicase SLH1 from Saccharomyces cerevisiae (strain ATCC 204508 / S288c) (Baker's yeast).